Reading from the N-terminus, the 247-residue chain is MNDQNSNQFIIYDSNNGFVITPKLTDNIISKLIDFIDQSRNSYREYYGVNCFLWKLDLVNNAIISDSAVEFIIDNDIFSQLSHIASYLFNHYYRLKGTFYCRTENIIEYIYMDGLTNLLTHYVLIDTIDSMCNDDSNDNEKLLSESKEKLNVFIKSTKGFTSDSESVEDIEKNNQSNITCKKIYYVNKIYNNPIINIGDSGKYSELKTKVNDIENDLRTLSSNTNLLWKISALMSMIIVGTVCYLRK.

Positions 200–225 (SGKYSELKTKVNDIENDLRTLSSNTN) form a coiled coil.

This is an uncharacterized protein from Acanthamoeba polyphaga (Amoeba).